The sequence spans 406 residues: 2,3-bisphosphoglycerate-independent phosphoglycerate mutase (406 aa).

The protein belongs to the BPG-independent phosphoglycerate mutase family. A-PGAM subfamily.

It catalyses the reaction (2R)-2-phosphoglycerate = (2R)-3-phosphoglycerate. It participates in carbohydrate degradation; glycolysis; pyruvate from D-glyceraldehyde 3-phosphate: step 3/5. In terms of biological role, catalyzes the interconversion of 2-phosphoglycerate and 3-phosphoglycerate. The chain is 2,3-bisphosphoglycerate-independent phosphoglycerate mutase from Methanococcus maripaludis (strain C5 / ATCC BAA-1333).